The following is a 277-amino-acid chain: tRNA U34 carboxymethyltransferase (277 aa).

Residues K46, W60, K65, G84, 106–108, 133–134, Y153, and R268 each bind carboxy-S-adenosyl-L-methionine; these read DPS and VE.

This sequence belongs to the class I-like SAM-binding methyltransferase superfamily. CmoB family. In terms of assembly, homotetramer.

It carries out the reaction carboxy-S-adenosyl-L-methionine + 5-hydroxyuridine(34) in tRNA = 5-carboxymethoxyuridine(34) in tRNA + S-adenosyl-L-homocysteine + H(+). Its function is as follows. Catalyzes carboxymethyl transfer from carboxy-S-adenosyl-L-methionine (Cx-SAM) to 5-hydroxyuridine (ho5U) to form 5-carboxymethoxyuridine (cmo5U) at position 34 in tRNAs. This Wolinella succinogenes (strain ATCC 29543 / DSM 1740 / CCUG 13145 / JCM 31913 / LMG 7466 / NCTC 11488 / FDC 602W) (Vibrio succinogenes) protein is tRNA U34 carboxymethyltransferase.